The sequence spans 146 residues: Large ribosomal subunit protein uL15 (146 aa).

The segment covering 1–18 (MKLHELKPSEGSRKERNR) has biased composition (basic and acidic residues). Residues 1–50 (MKLHELKPSEGSRKERNRVGRGTGSGNGKTSGRGHKGQKARSGGGVRLGF) form a disordered region. The span at 21–31 (RGTGSGNGKTS) shows a compositional bias: gly residues.

It belongs to the universal ribosomal protein uL15 family. Part of the 50S ribosomal subunit.

Functionally, binds to the 23S rRNA. The polypeptide is Large ribosomal subunit protein uL15 (Listeria monocytogenes serotype 4b (strain CLIP80459)).